Reading from the N-terminus, the 251-residue chain is MSVSPVSIVSTPVAVSESPAGSPVQPAVPVTVRWRGSEAYQTSFDAMRAFTDTRTADTGDEIWVVEHPPVYTLGQAGDPAHLLVADSGVPLVKVDRGGQITYHGPGQIVVYLLLDLRRRKLMVRTLVTKIEEAVIETLAAYNLASVRKAGAPGIYVASGVHEGAKIAALGLKIRNGCSYHGLSLNVKMDLRPFLAINPCGYAGLETVDMASLEVAADWNDVAHTLVGRLIANLDGESAAADKPQALEHSND.

The region spanning 56–237 is the BPL/LPL catalytic domain; it reads ADTGDEIWVV…RLIANLDGES (182 aa). Residues 96–103, 168–170, and 181–183 each bind substrate; these read RGGQITYH, ALG, and GLS. Residue Cys199 is the Acyl-thioester intermediate of the active site.

The protein belongs to the LipB family.

It localises to the cytoplasm. The catalysed reaction is octanoyl-[ACP] + L-lysyl-[protein] = N(6)-octanoyl-L-lysyl-[protein] + holo-[ACP] + H(+). It participates in protein modification; protein lipoylation via endogenous pathway; protein N(6)-(lipoyl)lysine from octanoyl-[acyl-carrier-protein]: step 1/2. Functionally, catalyzes the transfer of endogenously produced octanoic acid from octanoyl-acyl-carrier-protein onto the lipoyl domains of lipoate-dependent enzymes. Lipoyl-ACP can also act as a substrate although octanoyl-ACP is likely to be the physiological substrate. This Burkholderia ambifaria (strain ATCC BAA-244 / DSM 16087 / CCUG 44356 / LMG 19182 / AMMD) (Burkholderia cepacia (strain AMMD)) protein is Octanoyltransferase.